Reading from the N-terminus, the 79-residue chain is ATP synthase subunit c (79 aa).

2 helical membrane passes run Val7 to Ile27 and Ile56 to Ile76.

It belongs to the ATPase C chain family. In terms of assembly, F-type ATPases have 2 components, F(1) - the catalytic core - and F(0) - the membrane proton channel. F(1) has five subunits: alpha(3), beta(3), gamma(1), delta(1), epsilon(1). F(0) has three main subunits: a(1), b(2) and c(10-14). The alpha and beta chains form an alternating ring which encloses part of the gamma chain. F(1) is attached to F(0) by a central stalk formed by the gamma and epsilon chains, while a peripheral stalk is formed by the delta and b chains.

The protein localises to the cell membrane. Its function is as follows. F(1)F(0) ATP synthase produces ATP from ADP in the presence of a proton or sodium gradient. F-type ATPases consist of two structural domains, F(1) containing the extramembraneous catalytic core and F(0) containing the membrane proton channel, linked together by a central stalk and a peripheral stalk. During catalysis, ATP synthesis in the catalytic domain of F(1) is coupled via a rotary mechanism of the central stalk subunits to proton translocation. Key component of the F(0) channel; it plays a direct role in translocation across the membrane. A homomeric c-ring of between 10-14 subunits forms the central stalk rotor element with the F(1) delta and epsilon subunits. This chain is ATP synthase subunit c, found in Clostridium botulinum (strain Hall / ATCC 3502 / NCTC 13319 / Type A).